Here is a 124-residue protein sequence, read N- to C-terminus: Small ribosomal subunit protein eS25 (124 aa).

The segment covering 1 to 22 (MPPKDSKQKKDTSKAKKDKDPV) has biased composition (basic and acidic residues). A disordered region spans residues 1-37 (MPPKDSKQKKDTSKAKKDKDPVNKSGGKAKKKKWSKG). Positions 27 to 37 (GKAKKKKWSKG) are enriched in basic residues.

The protein belongs to the eukaryotic ribosomal protein eS25 family. In terms of assembly, component of the small ribosomal subunit.

The protein localises to the cytoplasm. Its function is as follows. Component of the small ribosomal subunit. The ribosome is a large ribonucleoprotein complex responsible for the synthesis of proteins in the cell. In Ictalurus punctatus (Channel catfish), this protein is Small ribosomal subunit protein eS25 (rps25).